We begin with the raw amino-acid sequence, 440 residues long: Golgi-associated RAB2 interactor protein 2 (440 aa).

This sequence belongs to the GARIN family. In terms of assembly, interacts with CALM1. In terms of tissue distribution, expressed in testis (at protein level).

It is found in the cell projection. It localises to the cilium. Its subcellular location is the flagellum. Seems to play a role in sperm motility. This Mus musculus (Mouse) protein is Golgi-associated RAB2 interactor protein 2.